The following is a 385-amino-acid chain: Mannitol-1-phosphate 5-dehydrogenase (385 aa).

3 to 14 (AVHFGAGNIGRG) serves as a coordination point for NAD(+).

It belongs to the mannitol dehydrogenase family.

The enzyme catalyses D-mannitol 1-phosphate + NAD(+) = beta-D-fructose 6-phosphate + NADH + H(+). The polypeptide is Mannitol-1-phosphate 5-dehydrogenase (Geobacillus thermodenitrificans (strain NG80-2)).